The sequence spans 89 residues: Large ribosomal subunit protein bL27 (89 aa).

The disordered stretch occupies residues 1–21 (MAHKKAGGSSRNGRDSQSKRL).

The protein belongs to the bacterial ribosomal protein bL27 family.

The protein is Large ribosomal subunit protein bL27 of Rhizobium leguminosarum bv. trifolii (strain WSM2304).